Here is a 686-residue protein sequence, read N- to C-terminus: Rhophilin-2 (686 aa).

The REM-1 domain maps to 26–100 (NPLAQTGRSK…LEGLNISVGV (75 aa)). An interaction with Rho region spans residues 46 to 66 (QILKAVRMRTGAENLLKVATN). Residues 111 to 460 (PLIPLGLKET…RLTYAQHQEE (350 aa)) form the BRO1 domain. The 79-residue stretch at 515 to 593 (RSIRFTAEEG…DEIEMKVVSL (79 aa)) folds into the PDZ domain. Thr655 carries the post-translational modification Phosphothreonine.

Belongs to the RHPN family. As to quaternary structure, interacts with GTP-bound RhoA and RhoB. Interacts with both GTP- and GDP-bound RhoA. According to PubMed:12473120, it does not interact with RhoA. Interacts with KRT18. In terms of tissue distribution, widely expressed. Highly expressed in prostate, trachea, stomach, colon, thyroid and pancreas. Expressed at lower level in brain, spinal cord, kidney, placenta and liver.

It localises to the cytoplasm. It is found in the perinuclear region. Functionally, binds specifically to GTP-Rho. May function in a Rho pathway to limit stress fiber formation and/or increase the turnover of F-actin structures in the absence of high levels of RhoA activity. In Homo sapiens (Human), this protein is Rhophilin-2 (RHPN2).